Consider the following 199-residue polypeptide: Peptidyl-tRNA hydrolase (199 aa).

Tyrosine 18 lines the tRNA pocket. Catalysis depends on histidine 23, which acts as the Proton acceptor. TRNA is bound by residues tyrosine 72, asparagine 74, and asparagine 120.

The protein belongs to the PTH family. In terms of assembly, monomer.

It localises to the cytoplasm. It carries out the reaction an N-acyl-L-alpha-aminoacyl-tRNA + H2O = an N-acyl-L-amino acid + a tRNA + H(+). Hydrolyzes ribosome-free peptidyl-tRNAs (with 1 or more amino acids incorporated), which drop off the ribosome during protein synthesis, or as a result of ribosome stalling. Its function is as follows. Catalyzes the release of premature peptidyl moieties from peptidyl-tRNA molecules trapped in stalled 50S ribosomal subunits, and thus maintains levels of free tRNAs and 50S ribosomes. The polypeptide is Peptidyl-tRNA hydrolase (Bifidobacterium adolescentis (strain ATCC 15703 / DSM 20083 / NCTC 11814 / E194a)).